The following is a 293-amino-acid chain: Xylanase inhibitor protein XIP (293 aa).

The N-terminal stretch at 1-21 (MALRRLAALLSLAVLLSAGLA) is a signal peptide. Positions 31-293 (GDTVIIWGRN…DKKTGFTAHL (263 aa)) constitute a GH18 domain. Cystine bridges form between C50-C92 and C189-C218.

It belongs to the glycosyl hydrolase 18 family. Xylanase inhibitor subfamily. As to expression, expressed in mature grain.

The protein localises to the secreted. In terms of biological role, fungal xylanase inhibitor. Possesses competitive inhibiting activity against several fungal endo-1,4-beta-D-xylanases belonging to glycoside hydrolase family 10 (GH10) and family 11 (GH11). May function in plant defense against secreted fungal pathogen xylanases. Is similar to class III chitinases, but does not exhibit chitinase activity. This chain is Xylanase inhibitor protein XIP, found in Oryza sativa subsp. japonica (Rice).